A 216-amino-acid polypeptide reads, in one-letter code: Small ribosomal subunit protein uS5 (216 aa).

One can recognise an S5 DRBM domain in the interval 51-114; sequence LEEEVIDVNL…DDAKFNIIKV (64 aa).

The protein belongs to the universal ribosomal protein uS5 family. Part of the 30S ribosomal subunit. Contacts protein S4.

Functionally, with S4 and S12 plays an important role in translational accuracy. This Methanothermobacter thermautotrophicus (strain ATCC 29096 / DSM 1053 / JCM 10044 / NBRC 100330 / Delta H) (Methanobacterium thermoautotrophicum) protein is Small ribosomal subunit protein uS5.